Consider the following 472-residue polypeptide: MTNFLSEDFLLMNEYDRELYYTFAKNMPICDYHCHLSPQEIWENKPFENMTKAWLGGDHYKWRAMRLNGVREEFITGGAPDKEKFLAWAKTVPKTIGNPLYHWTHMELKTYFHFHQPLDETNGENVWDACNRLLQQEAFTPRALIERSNVRAIGTTDDPTDSLLYHQKLQADDTFHVKVIPTFRPDGALKIEQDSFADWVAKLSDVTGESLDTLDAFLHALKERLTFFDEHGCRSSDHDMTEVPFVEVNEQEAQHIFRKRLANEGLTKVENEKYKTFLMTWLGKEYAARGWVMQWHIGVMRNNNSRMLHKLGPDTGFDSIGDGQIAHATAKLLDLLDKQGALPKTILYCVNPNANYILASMIGNFTESGVRGKVQFGSAWWFNDHIDGMRRQLTDLASVGLLSNFIGMLTDSRSFLSYPRHDYFRRILCQLIGSWIKEGQLPPDMERWGQIVQDICYNNVVDYFDMKETVRL.

The protein belongs to the metallo-dependent hydrolases superfamily. Uronate isomerase family.

It carries out the reaction D-glucuronate = D-fructuronate. The enzyme catalyses aldehydo-D-galacturonate = keto-D-tagaturonate. It participates in carbohydrate metabolism; pentose and glucuronate interconversion. This chain is Uronate isomerase, found in Halalkalibacterium halodurans (strain ATCC BAA-125 / DSM 18197 / FERM 7344 / JCM 9153 / C-125) (Bacillus halodurans).